A 314-amino-acid polypeptide reads, in one-letter code: CBASS oligonucleotide cyclase CdnC (314 aa).

K60 contacts ATP. Residues D73 and D75 each coordinate Mg(2+). Residues D75, K186, 197–199, and N263 each bind ATP; that span reads KSF.

This sequence belongs to the CD-NTase family. C01 subfamily. As to quaternary structure, forms complexes with Cap7 with 1:1 and 2:2 stoichimetry, and a 1:1:6 CdnC:Cap7:Cap6 complex. Requires Mg(2+) as cofactor.

Functionally, cyclic nucleotide synthase (second messenger synthase) of a CBASS antivirus system. CBASS (cyclic oligonucleotide-based antiphage signaling system) provides immunity against bacteriophage. The CD-NTase protein synthesizes cyclic nucleotides in response to infection; these serve as specific second messenger signals. The signals activate a diverse range of effectors, leading to bacterial cell death and thus abortive phage infection. A type III CBASS system. Expression of this CBASS system (Cap18-Cap6-Cap7-CdnC-CapW-Cap17) in a susceptible E.coli (strain MG1655) confers resistance to bacteriophage P1. Probable cyclic nucleotide synthase that upon activation catalyzes the synthesis of a cyclic nucleotide. A cyclase activity for this enzyme was not identified in. In Escherichia coli (strain KTE188), this protein is CBASS oligonucleotide cyclase CdnC.